The primary structure comprises 636 residues: Chaperone protein DnaK (636 aa).

T198 carries the post-translational modification Phosphothreonine; by autocatalysis. The interval 602–636 (QAEGAQPGGEAAGEASAKDEKVVDADFEEVKDDKK) is disordered. The span at 626-636 (ADFEEVKDDKK) shows a compositional bias: acidic residues.

The protein belongs to the heat shock protein 70 family.

Its function is as follows. Acts as a chaperone. The protein is Chaperone protein DnaK of Geobacter sulfurreducens (strain ATCC 51573 / DSM 12127 / PCA).